The primary structure comprises 183 residues: NRR repressor homolog 1 (183 aa).

2 disordered regions span residues 1 to 40 (MEGV…VVGG) and 66 to 183 (NGEE…PTDQ). The segment covering 31-40 (EEEEGAVVGG) has biased composition (acidic residues). The segment covering 70–79 (GAAGGDGDGA) has biased composition (gly residues). Acidic residues predominate over residues 101–115 (FEFEEAAAGAGDDDA). The span at 135 to 145 (AVEKRRTEKEA) shows a compositional bias: basic and acidic residues. The segment covering 150-161 (AEDDDDEQEGGE) has biased composition (acidic residues). Positions 163-183 (VEGKEEHRPGRRVEAHGPTDQ) are enriched in basic and acidic residues.

This sequence belongs to the NPR1-interactor family. As to quaternary structure, interacts with NPR1/NH1. Interacts with NPR3/NH3.

The protein localises to the nucleus. Binds to and represses NPR1/NH1-mediated transcriptional activation of LG2 in vitro. The chain is NRR repressor homolog 1 from Oryza sativa subsp. japonica (Rice).